Here is a 432-residue protein sequence, read N- to C-terminus: Adenosylhomocysteinase (432 aa).

Substrate is bound by residues threonine 56, aspartate 131, and glutamate 156. 157–159 (TTT) is an NAD(+) binding site. The substrate site is built by lysine 186 and aspartate 190. Residues asparagine 191, 222–227 (GDVGKG), glutamate 243, 299–301 (IGH), and asparagine 346 each bind NAD(+).

It belongs to the adenosylhomocysteinase family. NAD(+) is required as a cofactor.

It carries out the reaction S-adenosyl-L-homocysteine + H2O = L-homocysteine + adenosine. Its pathway is amino-acid biosynthesis; L-homocysteine biosynthesis; L-homocysteine from S-adenosyl-L-homocysteine: step 1/1. In terms of biological role, adenosylhomocysteine is a competitive inhibitor of S-adenosyl-L-methionine-dependent methyl transferase reactions; therefore adenosylhomocysteinase may play a key role in the control of methylations via regulation of the intracellular concentration of adenosylhomocysteine. This chain is Adenosylhomocysteinase (Ahcy13), found in Anopheles gambiae (African malaria mosquito).